A 611-amino-acid chain; its full sequence is Leukotriene A-4 hydrolase (611 aa).

Lysine 73 is subject to N6-acetyllysine. A peptide-binding positions include glutamine 135–glutamine 137 and proline 267–glutamate 272. Histidine 296 contacts Zn(2+). Catalysis depends on glutamate 297, which acts as the Proton acceptor. 2 residues coordinate Zn(2+): histidine 300 and glutamate 319. Lysine 337 bears the N6-acetyllysine mark. Residue tyrosine 384 is the Proton donor of the active site. An N6-acetyllysine modification is found at lysine 414. A Phosphoserine modification is found at serine 416. Residue arginine 564–lysine 566 participates in a peptide binding. Lysine 573 carries the post-translational modification N6-acetyllysine.

This sequence belongs to the peptidase M1 family. In terms of assembly, monomer. Zn(2+) is required as a cofactor. In terms of processing, phosphorylation at Ser-416 inhibits leukotriene-A4 hydrolase activity. Isoform 1 and isoform 2 are expressed in monocytes, lymphocytes, neutrophils, reticulocytes, platelets and fibroblasts.

Its subcellular location is the cytoplasm. The catalysed reaction is leukotriene A4 + H2O = leukotriene B4. It carries out the reaction (5S,6S)-epoxy-(18R)-hydroxy-(7E,9E,11Z,14Z,16E)-eicosapentaenoate + H2O = resolvin E1. It catalyses the reaction (5S,6S)-epoxy-(18S)-hydroxy-(7E,9E,11Z,14Z,16E)-eicosapentaenoate + H2O = 18S-resolvin E1. The enzyme catalyses Release of the N-terminal residue from a tripeptide.. It functions in the pathway lipid metabolism; leukotriene B4 biosynthesis. Inhibited by bestatin. The epoxide hydrolase activity is restrained by suicide inactivation that involves binding of LTA4 to Tyr-379. 4-(4-benzylphenyl)thiazol-2-amine (ARM1) selectively inhibits the epoxide hydrolase activity. Functionally, bifunctional zinc metalloenzyme that comprises both epoxide hydrolase (EH) and aminopeptidase activities. Acts as an epoxide hydrolase to catalyze the conversion of LTA4 to the pro-inflammatory mediator leukotriene B4 (LTB4). Also has aminopeptidase activity, with high affinity for N-terminal arginines of various synthetic tripeptides. In addition to its pro-inflammatory EH activity, may also counteract inflammation by its aminopeptidase activity, which inactivates by cleavage another neutrophil attractant, the tripeptide Pro-Gly-Pro (PGP), a bioactive fragment of collagen generated by the action of matrix metalloproteinase-9 (MMP9) and prolylendopeptidase (PREPL). Involved also in the biosynthesis of resolvin E1 and 18S-resolvin E1 from eicosapentaenoic acid, two lipid mediators that show potent anti-inflammatory and pro-resolving actions. The chain is Leukotriene A-4 hydrolase (LTA4H) from Homo sapiens (Human).